Here is a 183-residue protein sequence, read N- to C-terminus: ATP synthase subunit delta (183 aa).

The protein belongs to the ATPase delta chain family. F-type ATPases have 2 components, F(1) - the catalytic core - and F(0) - the membrane proton channel. F(1) has five subunits: alpha(3), beta(3), gamma(1), delta(1), epsilon(1). F(0) has three main subunits: a(1), b(2) and c(10-14). The alpha and beta chains form an alternating ring which encloses part of the gamma chain. F(1) is attached to F(0) by a central stalk formed by the gamma and epsilon chains, while a peripheral stalk is formed by the delta and b chains.

It localises to the cell inner membrane. Its function is as follows. F(1)F(0) ATP synthase produces ATP from ADP in the presence of a proton or sodium gradient. F-type ATPases consist of two structural domains, F(1) containing the extramembraneous catalytic core and F(0) containing the membrane proton channel, linked together by a central stalk and a peripheral stalk. During catalysis, ATP synthesis in the catalytic domain of F(1) is coupled via a rotary mechanism of the central stalk subunits to proton translocation. In terms of biological role, this protein is part of the stalk that links CF(0) to CF(1). It either transmits conformational changes from CF(0) to CF(1) or is implicated in proton conduction. This chain is ATP synthase subunit delta, found in Rickettsia typhi (strain ATCC VR-144 / Wilmington).